The following is a 366-amino-acid chain: Polyprenyl transferase AOL_s00215g276 (366 aa).

The segment at 1-22 (MESIIARPRTRSSAKEKTQTMS) is disordered. 7 helical membrane passes run 53–73 (LHTL…CLSA), 85–105 (FLSV…AFCT), 137–157 (IIAF…TLGF), 160–180 (ALVC…KRVV), 185–205 (LVLG…VAGN), 212–232 (AVPM…IYAT), and 253–273 (HMHQ…SFTA). N-linked (GlcNAc...) asparagine glycosylation is present at Asn-277. The next 2 helical transmembrane spans lie at 281–301 (LFWS…LLSL) and 312–332 (VFLM…IELW). Asn-352 is a glycosylation site (N-linked (GlcNAc...) asparagine).

Belongs to the UbiA prenyltransferase family. Mg(2+) serves as cofactor.

Its subcellular location is the membrane. Its pathway is secondary metabolite biosynthesis; terpenoid biosynthesis. Its function is as follows. Polyprenyl transferase; part of the gene cluster that mediates the biosynthesis of sesquiterpenyl epoxy-cyclohexenoids (SECs) such as anthrobotrisins and arthrosporols, metabolites that possess a novel hybrid carbon skeleton consisting of a polyketide-derived epoxycyclohexenol combined with a terpenoid-derived monocyclic sesquiterpenol substructure (PKS-PTS hybrid). The SEC pathway plays an important role for fungal soil colonization via decreasing fungal nematode-capturing ability. Within the pathway, the polyprenyl transferase catalyzes the farnesylation of toluquinol to yield farnesyl hydroquinone, the first hybrid precursor for biosynthesis of SECs, and farnesyl quinone (34) might be the key precursor for the epoxy ring formation. The pathway begins with the biosynthesis of 6-methylsalicylic acid (6-MSA), the first precursor of the polyketide-derived epoxycyclohexenol in arthrosporols, by the polyketide synthase (PKS) AOL_s00215g283 via condensation of 1 acetate and 3 malonate units. The 6-methylsalicylic acid decarboxylase AOL_s00215g281 then catalyzes the decarboxylation of 6-methylsalicylic acid to yield m-cresol. The cytochrome P450 monooxygenase AOL_s00215g282 further oxidizes m-cresol to yield toluquinol. With the assistance of the oxidoreductase AOL_s00215g277, the polyprenyl transferase AOL_s00215g276 catalyzes the farnesylation of toluquinol to produce farnesyl hydroquinone, the hybrid precursor for biosynthesis of SECs. Farnesyl hydroquinone undergoes epoxidation and then subsequent dehydrogenation to form farnesyl epoxy-quinone, the first and simplest SEC. The cytochrome P450 monooxygenase AOL_s00215g278 and the FAD-dependent monooxygenase AOL_s00215g279 might be involved in the oxygenation of the phenol moiety, most likely in the epoxy formation. The cytochrome P450 monooxygenases AOL_s00215g274 and AOL_s00215g280 are involved in specific regional ketone reductions at respectively C-4 and C-1 of farnesyl epoxy-quinone PubMed:33823587. This chain is Polyprenyl transferase AOL_s00215g276, found in Arthrobotrys oligospora (strain ATCC 24927 / CBS 115.81 / DSM 1491) (Nematode-trapping fungus).